The chain runs to 308 residues: MPSKASVAIVGSGNISTDLLYKLLRSDWLEPRWMVGIDPQSEGLARARKLGLETTHEGVDWLLAQSDKPDLVFEATSAYVHKAAAPKYAAAGIRAIDLTPAAVGPAVVPPANLREHLDAPNVNMITCGGQATIPIVYAVSRAVADLGGVPYAEIVASVASVSAGPGTRANIDEFTKTTSKGVETIGGARRGKAIIILNPADPPMIMRDTIFCAIPEDADRDAIAASIHEVVAQVQTYVPGYRLLNEPQFDEPSINSGGQAVVTTFVEVEGAGDYLPPYAGNLDIMTAAATKVGEEIAMQTLAVSGGKR.

12-15 (SGNI) provides a ligand contact to NAD(+). Cysteine 127 functions as the Acyl-thioester intermediate in the catalytic mechanism. NAD(+)-binding positions include 162 to 170 (SAGPGTRAN) and asparagine 281.

This sequence belongs to the acetaldehyde dehydrogenase family.

The catalysed reaction is acetaldehyde + NAD(+) + CoA = acetyl-CoA + NADH + H(+). This chain is Acetaldehyde dehydrogenase 2, found in Mycobacterium marinum (strain ATCC BAA-535 / M).